The primary structure comprises 314 residues: Serine/threonine-protein phosphatase PP-Y (314 aa).

Positions 60, 62, 88, and 120 each coordinate Mn(2+). The Proton donor role is filled by His121. Residues His169 and His244 each contribute to the Mn(2+) site.

This sequence belongs to the PPP phosphatase family. PP-Y subfamily. Mn(2+) serves as cofactor.

It catalyses the reaction O-phospho-L-seryl-[protein] + H2O = L-seryl-[protein] + phosphate. It carries out the reaction O-phospho-L-threonyl-[protein] + H2O = L-threonyl-[protein] + phosphate. This is Serine/threonine-protein phosphatase PP-Y (PpY-55A) from Drosophila melanogaster (Fruit fly).